A 206-amino-acid chain; its full sequence is Large ribosomal subunit protein uL4 (206 aa).

This sequence belongs to the universal ribosomal protein uL4 family. In terms of assembly, part of the 50S ribosomal subunit.

Its function is as follows. One of the primary rRNA binding proteins, this protein initially binds near the 5'-end of the 23S rRNA. It is important during the early stages of 50S assembly. It makes multiple contacts with different domains of the 23S rRNA in the assembled 50S subunit and ribosome. In terms of biological role, forms part of the polypeptide exit tunnel. The sequence is that of Large ribosomal subunit protein uL4 from Rhodopseudomonas palustris (strain BisA53).